Consider the following 510-residue polypeptide: Lysine--tRNA ligase (510 aa).

Glu-420 and Glu-427 together coordinate Mg(2+).

This sequence belongs to the class-II aminoacyl-tRNA synthetase family. Homodimer. Mg(2+) serves as cofactor.

The protein resides in the cytoplasm. The catalysed reaction is tRNA(Lys) + L-lysine + ATP = L-lysyl-tRNA(Lys) + AMP + diphosphate. The polypeptide is Lysine--tRNA ligase (Vibrio vulnificus (strain YJ016)).